A 1493-amino-acid chain; its full sequence is Mitogen-activated protein kinase kinase kinase 1 (1493 aa).

Low complexity-rich tracts occupy residues 1-23 (MAAA…ASPE) and 33-42 (GSGAPAAGAG). Disordered regions lie at residues 1–171 (MAAA…DRPE) and 222–295 (LQGE…EETS). The residue at position 2 (alanine 2) is an N-acetylalanine. Serine 21 bears the Phosphoserine mark. Pro residues predominate over residues 84-94 (PPCPSTSPSPE). Low complexity-rich tracts occupy residues 95–108 (PADA…FQPA) and 135–151 (ARSP…APSG). Serine 137 carries the post-translational modification Phosphoserine. A compositionally biased stretch (basic and acidic residues) spans 152 to 171 (REMENKETLKGLHKMDDRPE). Low complexity predominate over residues 230-257 (SAAPAPKGRRSPSPGSSPSGRSGKPESP). Serine 265 bears the Phosphoserine mark. Threonine 275 is subject to Phosphothreonine. Residues serine 282, serine 287, and serine 290 each carry the phosphoserine modification. The SWIM-type zinc-finger motif lies at 328–356 (YRVFIGPQNCSCGRGTFCIHLLFVMLRVF). Residues 433–482 (CPICLLGMLDEESLTVCEDGCRNKLHHHCMSIWAEECRRNREPLICPLCR) form an RING-type zinc finger. Positions 496–506 (SSPVDSPTSLR) are enriched in polar residues. Disordered stretches follow at residues 496–524 (SSPV…SQRR), 866–910 (DTLD…LSAS), 923–955 (VGLP…SPLS), and 992–1060 (PCKI…ASKN). Serine 497, serine 521, and serine 910 each carry phosphoserine. Residues 507–522 (GVQQPSSPQQPVAGSQ) are compositionally biased toward low complexity. Composition is skewed to polar residues over residues 925–940 (LPSS…TVQT) and 998–1014 (ASPQ…QRTC). Phosphoserine occurs at positions 999 and 1024. The span at 1049–1060 (GSTSKLGDASKN) shows a compositional bias: polar residues. One can recognise a Protein kinase domain in the interval 1224-1489 (WLKGQQIGLG…SRELLKHPVF (266 aa)). ATP is bound by residues 1230-1238 (IGLGAFSSC) and lysine 1253. The Proton acceptor role is filled by aspartate 1350. A phosphothreonine; by autocatalysis mark is found at threonine 1381 and threonine 1393.

It belongs to the protein kinase superfamily. STE Ser/Thr protein kinase family. MAP kinase kinase kinase subfamily. As to quaternary structure, binds both upstream activators and downstream substrates in multimolecular complexes through its N-terminus. Oligomerizes after binding MAP4K2 or TRAF2. Interacts (via the kinase catalytic domain) with STK38. Interacts with GRIPAP1. Requires Mg(2+) as cofactor. In terms of processing, autophosphorylated. In terms of tissue distribution, most highly expressed in spleen, kidney and lung.

It localises to the membrane. The enzyme catalyses L-seryl-[protein] + ATP = O-phospho-L-seryl-[protein] + ADP + H(+). The catalysed reaction is L-threonyl-[protein] + ATP = O-phospho-L-threonyl-[protein] + ADP + H(+). With respect to regulation, activated by autophosphorylation on Thr-1381 and Thr-1393 following oligomerization. Component of a protein kinase signal transduction cascade. Activates the ERK and JNK kinase pathways by phosphorylation of MAP2K1 and MAP2K4. May phosphorylate the MAPK8/JNK1 kinase. Activates CHUK and IKBKB, the central protein kinases of the NF-kappa-B pathway. This is Mitogen-activated protein kinase kinase kinase 1 (Map3k1) from Rattus norvegicus (Rat).